A 101-amino-acid chain; its full sequence is MRDRGKLVIWPVYLDQTKSRSSGRIISRKNAIKEPQLNEIKEAARQLGLNPEVEPHKAYPKSWWEVSGRVLVDDNGPKTVIAKQIALAIKKMRGPESSAKA.

The protein belongs to the SRP19 family. In terms of assembly, part of the signal recognition particle protein translocation system, which is composed of SRP and FtsY. Archaeal SRP consists of a 7S RNA molecule of 300 nucleotides and two protein subunits: SRP54 and SRP19.

It localises to the cytoplasm. Its function is as follows. Involved in targeting and insertion of nascent membrane proteins into the cytoplasmic membrane. Binds directly to 7S RNA and mediates binding of the 54 kDa subunit of the SRP. The chain is Signal recognition particle 19 kDa protein from Methanosarcina barkeri (strain Fusaro / DSM 804).